A 59-amino-acid chain; its full sequence is Prokaryotic ubiquitin-like protein UBact (59 aa).

The tract at residues 1–59 (MEMTDPLRREEKKESSPDPKEESGPSRPDVSRPGRDSLLKRMKKVDPKQSEKYKQRTGQ) is disordered. Gln59 carries the post-translational modification Deamidated glutamine. Residue Gln59 forms an Isoglutamyl lysine isopeptide (Gln-Lys) (interchain with K-? in acceptor proteins) linkage.

It belongs to the ubiquitin-like protein UBact family. In terms of processing, may be modified by deamidation of its C-terminal glutamine to glutamate by the adjacently encoded deamidase. This could be a prerequisite to the subsequent conjugation, as shown in the other prokaryotic ubiquitin-like protein Pup.

Functionally, may function as a protein modifier covalently attached to lysine residues of substrate proteins. This may serve to target the modified proteins for degradation by proteasomes. The protein is Prokaryotic ubiquitin-like protein UBact of Nitrospina gracilis (strain 3/211).